A 170-amino-acid polypeptide reads, in one-letter code: uncharacterized protein (170 aa).

The protein resides in the mitochondrion. This is an uncharacterized protein from Arabidopsis thaliana (Mouse-ear cress).